An 81-amino-acid chain; its full sequence is Photosystem I iron-sulfur center (81 aa).

2 4Fe-4S ferredoxin-type domains span residues 2–31 (SHSV…MIPW) and 39–68 (IAPA…VRVY). [4Fe-4S] cluster-binding residues include Cys-11, Cys-14, Cys-17, Cys-21, Cys-48, Cys-51, Cys-54, and Cys-58.

In terms of assembly, the eukaryotic PSI reaction center is composed of at least 11 subunits. The cofactor is [4Fe-4S] cluster.

It is found in the plastid. The protein resides in the chloroplast thylakoid membrane. The catalysed reaction is reduced [plastocyanin] + hnu + oxidized [2Fe-2S]-[ferredoxin] = oxidized [plastocyanin] + reduced [2Fe-2S]-[ferredoxin]. Its function is as follows. Apoprotein for the two 4Fe-4S centers FA and FB of photosystem I (PSI); essential for photochemical activity. FB is the terminal electron acceptor of PSI, donating electrons to ferredoxin. The C-terminus interacts with PsaA/B/D and helps assemble the protein into the PSI complex. Required for binding of PsaD and PsaE to PSI. PSI is a plastocyanin-ferredoxin oxidoreductase, converting photonic excitation into a charge separation, which transfers an electron from the donor P700 chlorophyll pair to the spectroscopically characterized acceptors A0, A1, FX, FA and FB in turn. The protein is Photosystem I iron-sulfur center of Drimys granadensis.